A 1386-amino-acid chain; its full sequence is DNA-directed RNA polymerase subunit beta (1386 aa).

It belongs to the RNA polymerase beta chain family. In terms of assembly, the RNAP catalytic core consists of 2 alpha, 1 beta, 1 beta' and 1 omega subunit. When a sigma factor is associated with the core the holoenzyme is formed, which can initiate transcription.

It catalyses the reaction RNA(n) + a ribonucleoside 5'-triphosphate = RNA(n+1) + diphosphate. In terms of biological role, DNA-dependent RNA polymerase catalyzes the transcription of DNA into RNA using the four ribonucleoside triphosphates as substrates. This chain is DNA-directed RNA polymerase subunit beta, found in Nitratiruptor sp. (strain SB155-2).